Consider the following 598-residue polypeptide: Biotin-dependent acyl-coenzyme A carboxylase alpha3 subunit (598 aa).

A Biotin carboxylation domain is found at 8–452; that stretch reads RIAKVLVANR…SFSVHTRWIE (445 aa). Positions 127-324 constitute an ATP-grasp domain; the sequence is RHIAARAQAP…LVLQQFKIAN (198 aa). 155–216 is a binding site for ATP; it reads AKEHGVPIAI…ERYLDKPRHV (62 aa). Residues Glu-282, Glu-295, and Asn-297 each coordinate Mg(2+). Mn(2+) contacts are provided by Glu-282, Glu-295, and Asn-297. Residues 506-531 form a disordered region; the sequence is PAGVIRKKPKPRKRGGHTGAATSGDA. The segment covering 510–521 has biased composition (basic residues); sequence IRKKPKPRKRGG. Residues 522 to 598 enclose the Biotinyl-binding domain; sequence HTGAATSGDA…TQGTVLAEIK (77 aa). N6-biotinyllysine is present on Lys-564.

In terms of assembly, the biotin-dependent acyl-CoA carboxylase complex is composed of AccA3, which contains the biotin carboxylase (BC) and biotin carboxyl carrier protein (BCCP) domains, and an AccD protein, which contains the carboxyl transferase (CT) domain. Mg(2+) serves as cofactor. It depends on Mn(2+) as a cofactor. The cofactor is biotin.

The enzyme catalyses N(6)-biotinyl-L-lysyl-[protein] + hydrogencarbonate + ATP = N(6)-carboxybiotinyl-L-lysyl-[protein] + ADP + phosphate + H(+). The protein operates within lipid metabolism; fatty acid biosynthesis. Its pathway is lipid metabolism; mycolic acid biosynthesis. Component of a biotin-dependent acyl-CoA carboxylase complex. This subunit catalyzes the ATP-dependent carboxylation of the biotin carried by the biotin carboxyl carrier (BCC) domain, resulting in the formation of carboxyl biotin. The polypeptide is Biotin-dependent acyl-coenzyme A carboxylase alpha3 subunit (bccA) (Mycobacterium leprae (strain TN)).